A 663-amino-acid chain; its full sequence is Translation factor GUF1 homolog, mitochondrial (663 aa).

Positions 64 to 250 constitute a tr-type G domain; the sequence is EKIRNFSIIA…AVIERIPPPP (187 aa). Residues 73–80, 143–147, and 197–200 contribute to the GTP site; these read AHIDHGKS, DTPGH, and NKID.

This sequence belongs to the TRAFAC class translation factor GTPase superfamily. Classic translation factor GTPase family. LepA subfamily.

It localises to the mitochondrion inner membrane. The enzyme catalyses GTP + H2O = GDP + phosphate + H(+). Functionally, promotes mitochondrial protein synthesis. May act as a fidelity factor of the translation reaction, by catalyzing a one-codon backward translocation of tRNAs on improperly translocated ribosomes. Binds to mitochondrial ribosomes in a GTP-dependent manner. The polypeptide is Translation factor GUF1 homolog, mitochondrial (Arabidopsis thaliana (Mouse-ear cress)).